We begin with the raw amino-acid sequence, 281 residues long: MAIKHYKPTTNGRRNMTSLDYKHNLSGDKPTKSLLRILKNSAGRNNQGKITVRHHGGRVKRFYRLVDFKRNKDNIPAVVKTIEYDPNRSANICLLAYADGEKRYIIAPKGIKVGQKVVSGEGADIIVGNSLPLSNIPEGTFIHNIEMQPGGGAKLARSAGTSAQILGKDDNGKYVVVKLKSGETRRILARCRATVGMVGNEEYSLVNVGKAGINRHRGIRPTVRGSVMNPVDHPHGGGEGKQPVGRKSPLTPWGKIALGVKTRKTKKSSNKLILRRRKDAK.

The disordered stretch occupies residues 223 to 281; the sequence is VRGSVMNPVDHPHGGGEGKQPVGRKSPLTPWGKIALGVKTRKTKKSSNKLILRRRKDAK. Over residues 261 to 281 the composition is skewed to basic residues; the sequence is KTRKTKKSSNKLILRRRKDAK.

It belongs to the universal ribosomal protein uL2 family. Part of the 50S ribosomal subunit. Forms a bridge to the 30S subunit in the 70S ribosome.

Functionally, one of the primary rRNA binding proteins. Required for association of the 30S and 50S subunits to form the 70S ribosome, for tRNA binding and peptide bond formation. It has been suggested to have peptidyltransferase activity; this is somewhat controversial. Makes several contacts with the 16S rRNA in the 70S ribosome. This Mycoplasmopsis synoviae (strain 53) (Mycoplasma synoviae) protein is Large ribosomal subunit protein uL2.